The following is a 298-amino-acid chain: Interferon-inducible double-stranded RNA-dependent protein kinase activator A homolog B (298 aa).

DRBM domains follow at residues 20–87, 112–180, and 225–293; these read TPIQ…ILRG, NPVG…KFKT, and DYVK…YLKI.

This sequence belongs to the PRKRA family. Homodimer. Interacts with dicer1 and eif2ak2/pkr. Also able to interact with dsRNA. Associates with ribosomes. As to expression, expressed in brain, heart, kidney, liver, nerve and spleen.

Its subcellular location is the cytoplasm. The protein localises to the perinuclear region. It is found in the nucleus. The protein resides in the nucleolus. In terms of biological role, activates eif2ak2/pkr in the absence of double-stranded RNA (dsRNA), leading to phosphorylation of eif2s1/efi2-alpha and inhibition of translation and induction of apoptosis. Required for siRNA production by dicer1 and for subsequent siRNA-mediated post-transcriptional gene silencing. Does not seem to be required for processing of pre-miRNA to miRNA by dicer1. The polypeptide is Interferon-inducible double-stranded RNA-dependent protein kinase activator A homolog B (prkra-b) (Xenopus laevis (African clawed frog)).